The chain runs to 487 residues: Lysophospholipid acyltransferase 5 (487 aa).

Ala-2 is modified (N-acetylalanine). Transmembrane regions (helical) follow at residues 44-64 (LIFSIFLGYPLALFYRHYLFY), 67-87 (SYLIHLFHAFSGLSIAYFNFG), 111-131 (ITAVFTTLCFQMAYLLAGYYY), 178-198 (ILGVPSLLEVAGFSYFYGAFL), 236-256 (LGLVYLVGYTLLSPHITEDYL), and 285-305 (VTCWLVTEGVCILSGLGFNGF). An N-linked (GlcNAc...) asparagine glycan is attached at Asn-308. Active-site residues include Asn-338 and His-374. The next 3 helical transmembrane spans lie at 364-384 (GLSLLFLALWHGLHSGYLICF), 422-442 (LVQQTIHWLFMGYSMTAFCLF), and 453-473 (SIYFLGHVFFLSLLFTLPYVY). Positions 484–487 (KKRE) match the Di-lysine motif motif.

This sequence belongs to the membrane-bound acyltransferase family.

It localises to the endoplasmic reticulum membrane. It catalyses the reaction a 1-acyl-sn-glycero-3-phosphocholine + an acyl-CoA = a 1,2-diacyl-sn-glycero-3-phosphocholine + CoA. The enzyme catalyses a 1-acyl-sn-glycero-3-phosphoethanolamine + an acyl-CoA = a 1,2-diacyl-sn-glycero-3-phosphoethanolamine + CoA. The catalysed reaction is a 1-acyl-sn-glycero-3-phospho-L-serine + an acyl-CoA = a 1,2-diacyl-sn-glycero-3-phospho-L-serine + CoA. It carries out the reaction (9Z,12Z)-octadecadienoyl-CoA + a 1-acyl-sn-glycero-3-phosphocholine = 1-acyl-2-(9Z,12Z)-octadecadienoyl-sn-glycero-3-phosphocholine + CoA. It catalyses the reaction (5Z,8Z,11Z,14Z)-eicosatetraenoyl-CoA + a 1-acyl-sn-glycero-3-phosphocholine = 1-acyl-2-(5Z,8Z,11Z,14Z-eicosatetraenoyl)-sn-glycero-3-phosphocholine + CoA. The enzyme catalyses dodecanoyl-CoA + 1-hexadecanoyl-sn-glycero-3-phosphocholine = 1-hexadecanoyl-2-dodecanoyl-sn-glycero-3-phosphocholine + CoA. The catalysed reaction is octadecanoyl-CoA + 1-hexadecanoyl-sn-glycero-3-phosphocholine = 1-hexadecanoyl-2-octadecanoyl-sn-glycero-3-phosphocholine + CoA. It carries out the reaction 1-dodecanoyl-sn-glycero-3-phosphocholine + hexadecanoyl-CoA = 1-dodecanoyl-2-hexadecanoyl-sn-glycero-3-phosphocholine + CoA. It catalyses the reaction 1-tetradecanoyl-sn-glycero-3-phosphocholine + hexadecanoyl-CoA = 1-tetradecanoyl-2-hexadecanoyl-sn-glycero-3-phosphocholine + CoA. The enzyme catalyses 1-hexadecanoyl-sn-glycero-3-phosphocholine + hexadecanoyl-CoA = 1,2-dihexadecanoyl-sn-glycero-3-phosphocholine + CoA. The catalysed reaction is 1-octadecanoyl-sn-glycero-3-phosphocholine + hexadecanoyl-CoA = 1-octadecanoyl-2-hexadecanoyl-sn-glycero-3-phosphocholine + CoA. It carries out the reaction 1-(9Z-octadecenoyl)-sn-glycero-3-phosphocholine + hexadecanoyl-CoA = 1-(9Z-octadecenoyl)-2-hexadecanoyl-sn-glycero-3-phosphocholine + CoA. It catalyses the reaction (9Z)-hexadecenoyl-CoA + 1-hexadecanoyl-sn-glycero-3-phosphocholine = 1-hexadecanoyl-2-(9Z-hexadecenoyl)-sn-glycero-3-phosphocholine + CoA. The enzyme catalyses 1-hexadecanoyl-sn-glycero-3-phosphocholine + (9Z)-octadecenoyl-CoA = 1-hexadecanoyl-2-(9Z-octadecenoyl)-sn-glycero-3-phosphocholine + CoA. The catalysed reaction is (9Z,12Z)-octadecadienoyl-CoA + 1-hexadecanoyl-sn-glycero-3-phosphocholine = 1-hexadecanoyl-2-(9Z,12Z-octadecadienoyl)-sn-glycero-3-phosphocholine + CoA. It carries out the reaction 1-dodecanoyl-sn-glycero-3-phosphocholine + (5Z,8Z,11Z,14Z)-eicosatetraenoyl-CoA = 1-dodecanoyl-2-(5Z,8Z,11Z,14Z)-eicosatetraenoyl-sn-glycero-3-phosphocholine + CoA. It catalyses the reaction (5Z,8Z,11Z,14Z)-eicosatetraenoyl-CoA + 1-hexadecanoyl-sn-glycero-3-phosphocholine = 1-hexadecanoyl-2-(5Z,8Z,11Z,14Z-eicosatetraenoyl)-sn-glycero-3-phosphocholine + CoA. The enzyme catalyses 1-octadecanoyl-sn-glycero-3-phosphocholine + (5Z,8Z,11Z,14Z)-eicosatetraenoyl-CoA = 1-octadecanoyl-2-(5Z,8Z,11Z,14Z-eicosatetraenoyl)-sn-glycero-3-phosphocholine + CoA. The catalysed reaction is 1-eicosanoyl-sn-glycero-3-phosphocholine + (5Z,8Z,11Z,14Z)-eicosatetraenoyl-CoA = 1-eicosanoyl-2-(5Z,8Z,11Z,14Z)-eicosatetraenoyl-sn-glycero-3-phosphocholine + CoA. It carries out the reaction 1-(9Z-octadecenoyl)-sn-glycero-3-phosphocholine + (9Z)-octadecenoyl-CoA = 1,2-di-(9Z-octadecenoyl)-sn-glycero-3-phosphocholine + CoA. It catalyses the reaction 1-(9Z-octadecenoyl)-sn-glycero-3-phosphocholine + (9Z,12Z)-octadecadienoyl-CoA = 1-(9Z)-octadecenoyl-2-(9Z,12Z)-octadecadienoyl-sn-glycero-3-phosphocholine + CoA. The enzyme catalyses 1-(9Z-octadecenoyl)-sn-glycero-3-phosphocholine + (5Z,8Z,11Z,14Z)-eicosatetraenoyl-CoA = 1-(9Z)-octadecenoyl-2-(5Z,8Z,11Z,14Z)-icosatetraenoyl-sn-glycero-3-phosphocholine + CoA. The catalysed reaction is a 1-acyl-sn-glycero-3-phosphoethanolamine + (9Z,12Z)-octadecadienoyl-CoA = 1-acyl-2-(9Z,12Z)-octadecadienoyl-sn-glycero-3-phosphoethanolamine + CoA. It carries out the reaction 1-(9Z-octadecenoyl)-sn-glycero-3-phosphoethanolamine + (9Z,12Z)-octadecadienoyl-CoA = 1-(9Z)-octadecenoyl-2-(9Z,12Z)-octadecadienoyl-sn-glycero-3-phosphoethanolamine + CoA. It catalyses the reaction 1-(10Z-heptadecenoyl)-sn-glycero-3-phosphoethanolamine + (9Z,12Z)-octadecadienoyl-CoA = 1-(10Z-heptadecenoyl)-2-(9Z,12Z-octadecadienoyl)-sn-glycero-3-phosphoethanolamine + CoA. The enzyme catalyses a 1-acyl-sn-glycero-3-phosphoethanolamine + (5Z,8Z,11Z,14Z)-eicosatetraenoyl-CoA = 1-acyl-2-(5Z,8Z,11Z,14Z)-eicosatetraenoyl-sn-glycero-3-phosphoethanolamine + CoA. The catalysed reaction is 1-hexadecanoyl-sn-glycero-3-phosphoethanolamine + (5Z,8Z,11Z,14Z)-eicosatetraenoyl-CoA = 1-hexadecanoyl-2-(5Z,8Z,11Z,14Z-eicosatetraenoyl)-sn-glycero-3-phosphoethanolamine + CoA. It carries out the reaction 1-(9Z-octadecenoyl)-sn-glycero-3-phosphoethanolamine + (5Z,8Z,11Z,14Z)-eicosatetraenoyl-CoA = 1-(9Z)-octadecenoyl-2-(5Z,8Z,11Z,14Z)-eicosatetraenoyl-sn-glycero-3-phosphoethanolamine + CoA. It catalyses the reaction 1-(10Z-heptadecenoyl)-sn-glycero-3-phosphoethanolamine + (5Z,8Z,11Z,14Z)-eicosatetraenoyl-CoA = 1-(10Z-heptadecenoyl)-2-(5Z,8Z,11Z,14Z-eicosatetraenoyl)-sn-glycero-3-phosphoethanolamine + CoA. The enzyme catalyses a 1-O-(1Z-alkenyl)-sn-glycero-3-phosphoethanolamine + (5Z,8Z,11Z,14Z)-eicosatetraenoyl-CoA = 1-O-(1Z)-alkenyl-2-(5Z,8Z,11Z,14Z)-eicosatetraenoyl-sn-glycero-3-phosphoethanolamine + CoA. The catalysed reaction is a 1-acyl-sn-glycero-3-phospho-L-serine + (9Z,12Z)-octadecadienoyl-CoA = 1-acyl-2-(9Z,12Z-octadecadienoyl)-sn-glycero-3-phospho-L-serine + CoA. It carries out the reaction a 1-acyl-sn-glycero-3-phospho-L-serine + (5Z,8Z,11Z,14Z)-eicosatetraenoyl-CoA = 1-acyl-2-(5Z,8Z,11Z,14Z-eicosatetraenoyl)-sn-glycero-3-phospho-L-serine + CoA. It catalyses the reaction 1-hexadecanoyl-sn-glycero-3-phospho-L-serine + (9Z)-octadecenoyl-CoA = 1-hexadecanoyl-2-(9Z-octadecenoyl)-sn-glycero-3-phospho-L-serine + CoA. The enzyme catalyses 1-(9Z-octadecenoyl)-sn-glycero-3-phospho-L-serine + (9Z)-octadecenoyl-CoA = 1,2-di-(9Z)-octadecenoyl-sn-glycero-3-phospho-L-serine + CoA. The catalysed reaction is 1-hexadecanoyl-sn-glycero-3-phospho-L-serine + (9Z,12Z)-octadecadienoyl-CoA = 1-hexadecanoyl-2-(9Z,12Z-octadecadienoyl)-sn-glycero-3-phospho-L-serine + CoA. It carries out the reaction 1-(9Z-octadecenoyl)-sn-glycero-3-phospho-L-serine + (9Z,12Z)-octadecadienoyl-CoA = 1-(9Z-octadecenoyl)-2-(9Z,12Z-octadienoyl)-sn-glycero-3-phospho-L-serine + CoA. It catalyses the reaction 1-hexadecanoyl-sn-glycero-3-phospho-L-serine + (5Z,8Z,11Z,14Z)-eicosatetraenoyl-CoA = 1-hexadecanoyl-2-(5Z,8Z,11Z,14Z-eicosatetraenoyl)-sn-glycero-3-phospho-L-serine + CoA. The enzyme catalyses 1-(9Z-octadecenoyl)-sn-glycero-3-phospho-L-serine + (5Z,8Z,11Z,14Z)-eicosatetraenoyl-CoA = 1-(9Z-octadecenoyl)-2-(5Z,8Z,11Z,14Z-eicosatetraenoyl)-sn-glycero-3-phospho-L-serine + CoA. It participates in lipid metabolism; phospholipid metabolism. Functionally, lysophospholipid O-acyltransferase (LPLAT) that catalyzes the reacylation step of the phospholipid remodeling process also known as the Lands cycle. Catalyzes transfer of the fatty acyl chain from fatty acyl-CoA to 1-acyl lysophospholipid to form various classes of phospholipids. Converts 1-acyl lysophosphatidylcholine (LPC) into phosphatidylcholine (PC) (LPCAT activity), 1-acyl lysophosphatidylserine (LPS) into phosphatidylserine (PS) (LPSAT activity) and 1-acyl lysophosphatidylethanolamine (LPE) into phosphatidylethanolamine (PE) (LPEAT activity). Favors polyunsaturated fatty acyl-CoAs as acyl donors compared to saturated fatty acyl-CoAs. Has higher activity for LPC acyl acceptors compared to LPEs and LPSs. Can also transfer the fatty acyl chain from fatty acyl-CoA to 1-O-alkyl lysophospholipid or 1-O-alkenyl lysophospholipid with lower efficiency. Acts as a major LPC O-acyltransferase in liver and intestine. As a component of the liver X receptor/NR1H3 or NR1H2 signaling pathway, mainly catalyzes the incorporation of arachidonate into PCs of endoplasmic reticulum (ER) membranes, increasing membrane dynamics and enabling triacylglycerols transfer to nascent very low-density lipoprotein (VLDL) particles. Promotes processing of sterol regulatory protein SREBF1 in hepatocytes, likely by facilitating the translocation of SREBF1-SCAP complex from ER to the Golgi apparatus. Participates in mechanisms by which the liver X receptor/NR1H3 or NR1H2 signaling pathway counteracts lipid-induced ER stress response and inflammation. Down-regulates hepatic inflammation by limiting arachidonic acid availability for synthesis of inflammatory eicosanoids, such as prostaglandins. In enterocytes, acts as a component of a gut-brain feedback loop that coordinates dietary lipid absorption and food intake. Regulates the abundance of PCs containing linoleate and arachidonate in enterocyte membranes, enabling passive diffusion of fatty acids and cholesterol across the membrane for efficient chylomicron assembly. In the intestinal crypt, acts as a component of dietary-responsive phospholipid-cholesterol axis, regulating the biosynthesis of cholesterol and its mitogenic effects on intestinal stem cells. The chain is Lysophospholipid acyltransferase 5 (Lpcat3) from Rattus norvegicus (Rat).